The following is a 78-amino-acid chain: Translation initiation factor IF-1, chloroplastic (78 aa).

Positions 1-72 (MEKQKLIDME…TKGRITYRLR (72 aa)) constitute an S1-like domain.

The protein belongs to the IF-1 family. As to quaternary structure, component of the 30S ribosomal translation pre-initiation complex which assembles on the 30S ribosome in the order IF-2 and IF-3, IF-1 and N-formylmethionyl-tRNA(fMet); mRNA recruitment can occur at any time during PIC assembly.

The protein resides in the plastid. It localises to the chloroplast. Functionally, one of the essential components for the initiation of protein synthesis. Stabilizes the binding of IF-2 and IF-3 on the 30S subunit to which N-formylmethionyl-tRNA(fMet) subsequently binds. Helps modulate mRNA selection, yielding the 30S pre-initiation complex (PIC). Upon addition of the 50S ribosomal subunit IF-1, IF-2 and IF-3 are released leaving the mature 70S translation initiation complex. This Marchantia polymorpha (Common liverwort) protein is Translation initiation factor IF-1, chloroplastic.